Here is a 591-residue protein sequence, read N- to C-terminus: Adsorption protein P2 (591 aa).

A disulfide bridge connects residues cysteine 254 and cysteine 277.

The protein localises to the virion. Adsorption protein. In association with P31 and trimeric P5, forms the spike complexes located at the 5-fold vertices of the capsid. Involved in recognition and attachment to the receptor on the surface of the host. Likely triggers the processes of vertex disassembly, membrane tube formation, and subsequent DNA injection. Essential for viral infectivity. The chain is Adsorption protein P2 (II) from Acinetobacter calcoaceticus (Arthrobacter siderocapsulatus).